The following is a 514-amino-acid chain: RNA polymerase I-specific transcription initiation factor RRN7 (514 aa).

The segment at 3–36 (TFIRGPICGTDNCPSRLWRIIDGRRTCQYGHVME) adopts an RRN7-type zinc-finger fold. Zn(2+) is bound by residues Cys-10, Cys-15, Cys-29, and His-33. Residues 37-66 (GDVEFNDDEDDLNGLGAGVITRRLNLTTNA) form a B-reader region. The B-linker stretch occupies residues 67–101 (TGSFQSSQLTNSQLLQQQQRQSHKKFKKLIGHEAK). The tract at residues 102-210 (LLFLKSFQFI…KSWRIQLPNY (109 aa)) is N-terminal cyclin fold. Residues 211-320 (YVSILEGSIS…MLTINWMLSF (110 aa)) form a C-terminal cyclin fold region.

The protein belongs to the RRN7/TAF1B family. As to quaternary structure, component of the core factor (CF) complex, which consists of RRN6, RRN7 and RRN11. The CF heterotrimer may further dimerize to form a hexamer. RRN7 interacts with RRN6, RRN11, SPT15 and RRN9.

It localises to the nucleus. Its subcellular location is the nucleolus. Functionally, component of RNA polymerase I core factor complex (CF) that acts as a SUA7/TFIIB-like factor and plays a key role in multiple steps during transcription initiation such as pre-initiation complex (PIC) assembly and postpolymerase recruitment events in polymerase I (Pol I) transcription. Binds rDNA promoters and plays a role in Pol I recruitment. After binding of UAF (upstream activation factor) to an upstream element of the promoter, CF is recruited in a SPT15/TBP-dependent manner to form a pre-initiation complex. This Saccharomyces cerevisiae (strain ATCC 204508 / S288c) (Baker's yeast) protein is RNA polymerase I-specific transcription initiation factor RRN7 (RRN7).